Here is a 196-residue protein sequence, read N- to C-terminus: Heat shock protein beta-8 (196 aa).

The disordered stretch occupies residues 1 to 28 (MADGQLPFPCSYPSRLRRDPFRDSPLSS). 2 positions are modified to phosphoserine: serine 24 and serine 57. Threonine 63 is modified (phosphothreonine). Asymmetric dimethylarginine occurs at positions 71 and 78. The sHSP domain occupies 78-185 (RFGVPAEGRS…PFGESSFNNE (108 aa)). Serine 87 is modified (phosphoserine). Positions 176–196 (PFGESSFNNELPQDNQEVTCS) are disordered. Positions 178 to 196 (GESSFNNELPQDNQEVTCS) are enriched in polar residues.

It belongs to the small heat shock protein (HSP20) family. Monomer. Forms a ternary complex with BAG3 and HSPA1A. Component of the chaperone-assisted selective autophagy (CASA) complex consisting of BAG3, HSPA8/HSC70, HSPB8 and STUB1/CHIP. Interacts with HSPB1. Interacts with DNAJB6. Interacts with BAG3. Highly expressed in skeletal muscle, heart, uterus, liver, lung and ovary. Low levels found in stomach and brain. Not detected in small intestine, large intestine, kidney, spleen and testis. In the ovary, expression is concentrated in the endometrium and in the connective tissue between the circular and longitudinal muscles of the myometrium.

The protein localises to the cytoplasm. Its subcellular location is the nucleus. Involved in the chaperone-assisted selective autophagy (CASA), a crucial process for protein quality control, particularly in mechanical strained cells and tissues such as muscle. Displays temperature-dependent chaperone activity. The protein is Heat shock protein beta-8 (Hspb8) of Mus musculus (Mouse).